The primary structure comprises 37 residues: Somatostatin-37 (37 aa).

A propeptide spanning residues 1–2 (AL) is cleaved from the precursor. Cys26 and Cys37 are disulfide-bonded.

It belongs to the somatostatin family.

Its subcellular location is the secreted. Somatostatin inhibits the release of somatotropin. This Petromyzon marinus (Sea lamprey) protein is Somatostatin-37 (sst).